The primary structure comprises 401 residues: L-rhamnonate dehydratase (401 aa).

2 residues coordinate substrate: H29 and R55. D222, E248, and E276 together coordinate Mg(2+). The Proton acceptor role is filled by H325. E345 lines the substrate pocket.

It belongs to the mandelate racemase/muconate lactonizing enzyme family. RhamD subfamily. As to quaternary structure, homooctamer; tetramer of dimers. It depends on Mg(2+) as a cofactor.

The catalysed reaction is L-rhamnonate = 2-dehydro-3-deoxy-L-rhamnonate + H2O. Catalyzes the dehydration of L-rhamnonate to 2-keto-3-deoxy-L-rhamnonate (KDR). This chain is L-rhamnonate dehydratase, found in Salmonella heidelberg (strain SL476).